Reading from the N-terminus, the 107-residue chain is Guanylate cyclase activator 2B (107 aa).

A signal peptide spans 1-21 (MSGSQLWAAVVVLLLLQSAQG). The propeptide occupies 22–92 (VYIKYHGFQV…STFKALRTIA (71 aa)). Cystine bridges form between Cys-63–Cys-76, Cys-96–Cys-104, and Cys-99–Cys-107.

The protein belongs to the guanylin family.

Its subcellular location is the secreted. Endogenous activator of intestinal guanylate cyclase. It stimulates this enzyme through the same receptor binding region as the heat-stable enterotoxins. May be a potent physiological regulator of intestinal fluid and electrolyte transport. May be an autocrine/paracrine regulator of intestinal salt and water transport. This Notomys alexis (Spinifex hopping mouse) protein is Guanylate cyclase activator 2B (GUCA2B).